The sequence spans 297 residues: MEHEYQRAVTRVCVQTALLLLQHGAESTVVVQMAQRLGVALGVESVECALTANAVVLTTLSDNHCITTARKNTDKGINMQMVTDVQRIVIAVEHHLYELEIAQRKLDQLKPLKYNRWLVVFMIGLSCAAFAHLSSGDWIICGITIFMLKLLYDMLFAAIPAVGFALVFNVPPKALKYCAILAALGHVTRTLLLHINMPIVFATFFATCVIGFLGVHLSHRYLAHPKAFTVAAIIPMIPGVHAYKAMISMVQIHHFGFSDALFEQMISSFINTSFILGAIVFGLALPGLLFYRQKPVV.

5 helical membrane passes run 114 to 136 (YNRW…LSSG), 150 to 170 (LLYD…VFNV), 197 to 217 (MPIV…GVHL), 227 to 247 (AFTV…KAMI), and 269 to 289 (FINT…PGLL).

Belongs to the ThrE exporter (TC 2.A.79) family.

It is found in the cell inner membrane. This is an uncharacterized protein from Haemophilus influenzae (strain ATCC 51907 / DSM 11121 / KW20 / Rd).